We begin with the raw amino-acid sequence, 1088 residues long: MGKYNLILSEYLSFIYNSQSAVQIPIYYSSNSDLEKRCIEFHSKCLENSKKGLSLKNIFVEYKDVVENATLLSILSYSYDKYNAVERKLVYYAKGKPLEADLSANKLDYENNKLTSDLFPTAEEYTDSLMDPAILTSLSSNLNAVMFWLEKHANDTAEKAKIYKRRLDLFTIVASTVNKYGVPRHNAKYRYEYEVMKDKPYYLVTWANSSIEMLMSVFSHEDYLIAKELIVLSYSNRSTLAKLVSSPMSILVALVDINGTFITNEELELEFSNKYVKAIVPDQTFEELKEMLDNMKKAGLVDIPKMIQDWLVDCSIEKFPLMAKIYSWSFHVGFRKQKMLDAALDQLKTEYTEDVDDEMYREYTMLIRDEVVKMLEEAVKHDDHLLQDSELAGLLSMSSASNGESRQLKFGRKTIFSTKKNMHVMDDMANGRYTPGVIPPVNVDKPIPLGRRDVPGRRTRIIFILPYEYFIAQHAVVEKMLLYAKHTREYAEFYSQSNQLLSYGDVTRFLSNNAMVLYTDVSQWDSSQHNTQPFRKGIIMGLDILANMTNDAKVIQTLHLYKQTQINLMDSYVQIPDGNVIKKIQYGAVASGEKQTKAANSIANLALIKTVLSRIANKYSFVTKIIRVDGDDNYAVLQFNTEVTKQMVQDVSNDVRDTYARMNAKVKALVSTVGIEIAKRYIAGGKIFFRAGINLLNNEKRGQSTQWDQAAVLYSNYIVNRLRGFETDREFILTKIMQMTSVAITGSLRLFPSERVLTTNSTFKVFDSEDFIIEYGTTDDEVYIQRAFMSLSSQKSGIADEIAASQTFKNYVSKLSDQLLVSKNTIVSRGIALTEKAKLNSYAPISLEKRRAQISALLTMLQKPVTFKSNKITINDILHDIKPYFVTSEANLPMQYQKFMPTLPNNVQYIIQCIGSRTYQIEDDGSKSAISKLISKYSVYRPSIEELYKVISLHEQEIQLYLVSLGIPKIDADTYVGSKIYSQDKYRILESYVYNLLSINYGCYQLFDFNSPDLEKLIRIPFKGKIPAVTFILHLYAKLEIINYAIKNGSWISLFCNYPKSEMIKLWKKMWNITSLRSPYTNANFFQD.

A RdRp catalytic domain is found at 501–687 (LSYGDVTRFL…AKRYIAGGKI (187 aa)).

The protein belongs to the reoviridae RNA-directed RNA polymerase family. In terms of assembly, interacts with VP3 (Potential). Interacts with VP2; this interaction activates VP1. Interacts with NSP5; this interaction is probably necessary for the formation of functional virus factories. Interacts with NSP2; this interaction is weak. Mg(2+) is required as a cofactor.

The protein localises to the virion. The catalysed reaction is RNA(n) + a ribonucleoside 5'-triphosphate = RNA(n+1) + diphosphate. In terms of biological role, RNA-directed RNA polymerase that is involved in both transcription and genome replication. Together with VP3 capping enzyme, forms an enzyme complex positioned near the channels situated at each of the five-fold vertices of the core. Following infection, the outermost layer of the virus is lost, leaving a double-layered particle (DLP) made up of the core and VP6 shell. VP1 then catalyzes the transcription of fully conservative plus-strand genomic RNAs that are extruded through the DLP's channels into the cytoplasm where they function as mRNAs for translation of viral proteins. One copy of each of the viral (+)RNAs is also recruited during core assembly, together with newly synthesized polymerase complexes and VP2. The polymerase of these novo-formed particles catalyzes the synthesis of complementary minus-strands leading to dsRNA formation. To do so, the polymerase specifically recognizes and binds 4 bases 5'-UGUG-3' in the conserved 3'-sequence of plus-strand RNA templates. VP2 presumably activates the autoinhibited VP1-RNA complex to coordinate packaging and genome replication. Once dsRNA synthesis is complete, the polymerase switches to the transcriptional mode, thus providing secondary transcription. This Macaca mulatta (Rhesus macaque) protein is RNA-directed RNA polymerase.